Consider the following 234-residue polypeptide: Structural PPIase-like protein L605 (234 aa).

The region spanning 18-205 (YMDIVLNNEI…PTFSIGKCGA (188 aa)) is the PPIase cyclophilin-type domain.

Belongs to the cyclophilin-type PPIase family. Homotrimer.

It is found in the virion. The protein localises to the host cytoplasm. In Acanthamoeba polyphaga mimivirus (APMV), this protein is Structural PPIase-like protein L605.